Consider the following 425-residue polypeptide: Serine--tRNA ligase (425 aa).

233-235 (TAE) contacts L-serine. Residue 264-266 (RRE) coordinates ATP. Glu-287 lines the L-serine pocket. Residue 351–354 (EISS) participates in ATP binding. Residue Ser-385 coordinates L-serine.

The protein belongs to the class-II aminoacyl-tRNA synthetase family. Type-1 seryl-tRNA synthetase subfamily. As to quaternary structure, homodimer. The tRNA molecule binds across the dimer.

It localises to the cytoplasm. The enzyme catalyses tRNA(Ser) + L-serine + ATP = L-seryl-tRNA(Ser) + AMP + diphosphate + H(+). The catalysed reaction is tRNA(Sec) + L-serine + ATP = L-seryl-tRNA(Sec) + AMP + diphosphate + H(+). It participates in aminoacyl-tRNA biosynthesis; selenocysteinyl-tRNA(Sec) biosynthesis; L-seryl-tRNA(Sec) from L-serine and tRNA(Sec): step 1/1. Its function is as follows. Catalyzes the attachment of serine to tRNA(Ser). Is also able to aminoacylate tRNA(Sec) with serine, to form the misacylated tRNA L-seryl-tRNA(Sec), which will be further converted into selenocysteinyl-tRNA(Sec). In Parasynechococcus marenigrum (strain WH8102), this protein is Serine--tRNA ligase.